We begin with the raw amino-acid sequence, 176 residues long: Myelin basic protein (176 aa).

Positions 1–11 (MASQKHSRGHG) are enriched in basic residues. The tract at residues 1-176 (MASQKHSRGH…SRSSSPMARR (176 aa)) is disordered. A2 is modified (N-acetylalanine). S7 carries the phosphoserine modification. Citrulline is present on residues R25 and R33. S58 bears the Phosphoserine mark. N97 is modified (deamidated asparagine). T103 is modified (phosphothreonine). Q108 carries the deamidated glutamine modification. R111 is modified (symmetric dimethylarginine). S117 carries the post-translational modification Phosphoserine. A compositionally biased stretch (basic and acidic residues) spans 134 to 153 (SLEHHKSSYKGYKDPHREGH). Polar residues predominate over residues 166-176 (RSRSSSPMARR). Residues S167 and S171 each carry the phosphoserine modification. A Citrulline modification is found at R176.

The protein belongs to the myelin basic protein family. As to quaternary structure, homodimer. In terms of processing, as in other animals, several charge isomers may be produced as a result of optional post-translational modifications, such as phosphorylation of serine or threonine residues, deamidation of glutamine or asparagine residues, citrullination and methylation of arginine residues.

The protein resides in the myelin membrane. In terms of biological role, is, with PLP, the most abundant protein component of the myelin membrane in the CNS. Plays a role in both the formation and stabilization of this compact multilayer arrangement of bilayers. Each splice variant and charge isomer may have a specialized function in the assembly of an optimized, biochemically functional myelin membrane. This Xenopus laevis (African clawed frog) protein is Myelin basic protein (mbp).